The sequence spans 396 residues: MTTNTVSRKVAWLRVVTLAVAAFIFNTTEFVPVGLLSDIAQSFHMQTAQVGIMLTIYAWVVALMSLPFMLMTSQVERRKLLICLFVVFIASHVLSFLSWSFTVLVISRIGVAFAHAIFWSITASLAIRMAPAGKRAQALSLIATGTALAMVLGLPLGRIVGQYFGWRMTFFAIGIGALITLLCLIKLLPLLPSEHSGSLKSLPLLFRRPALMSIYLLTVVVVTAHYTAYSYIEPFVQNIAGFSANFATALLLLLGGAGIIGSVIFGKLGNQYASTLVSTAIALLLVCLALLLPAANSEIHLGVLSIFWGIAMMIIGLGMQVKVLALAPDATDVAMALFSGIFNIGIGAGALVGNQVSLHWSMSMIGYVGAVPAFAALIWSIIIFRRWPVTLEEQTQ.

Helical transmembrane passes span 15-35 (VVTLAVAAFIFNTTEFVPVGL), 50-70 (VGIMLTIYAWVVALMSLPFML), 81-101 (LICLFVVFIASHVLSFLSWSF), 103-123 (VLVISRIGVAFAHAIFWSITA), 136-156 (AQALSLIATGTALAMVLGLPL), 170-190 (FFAIGIGALITLLCLIKLLPL), 209-229 (PALMSIYLLTVVVVTAHYTAY), 246-266 (FATALLLLLGGAGIIGSVIFG), 275-295 (TLVSTAIALLLVCLALLLPAA), 299-319 (IHLGVLSIFWGIAMMIIGLGM), 333-353 (VAMALFSGIFNIGIGAGALVG), and 364-384 (MIGYVGAVPAFAALIWSIIIF).

This sequence belongs to the major facilitator superfamily. SotB (TC 2.A.1.2) family.

The protein resides in the cell inner membrane. Functionally, involved in the efflux of sugars. The physiological role may be the reduction of the intracellular concentration of toxic sugars or sugar metabolites. The sequence is that of Probable sugar efflux transporter from Escherichia coli (strain SMS-3-5 / SECEC).